Consider the following 618-residue polypeptide: 2-succinyl-5-enolpyruvyl-6-hydroxy-3-cyclohexene-1-carboxylate synthase (618 aa).

The disordered stretch occupies residues D192–D215.

The protein belongs to the TPP enzyme family. MenD subfamily. Homodimer. Mg(2+) serves as cofactor. Requires Mn(2+) as cofactor. Thiamine diphosphate is required as a cofactor.

The enzyme catalyses isochorismate + 2-oxoglutarate + H(+) = 5-enolpyruvoyl-6-hydroxy-2-succinyl-cyclohex-3-ene-1-carboxylate + CO2. It functions in the pathway quinol/quinone metabolism; 1,4-dihydroxy-2-naphthoate biosynthesis; 1,4-dihydroxy-2-naphthoate from chorismate: step 2/7. Its pathway is quinol/quinone metabolism; menaquinone biosynthesis. Its function is as follows. Catalyzes the thiamine diphosphate-dependent decarboxylation of 2-oxoglutarate and the subsequent addition of the resulting succinic semialdehyde-thiamine pyrophosphate anion to isochorismate to yield 2-succinyl-5-enolpyruvyl-6-hydroxy-3-cyclohexene-1-carboxylate (SEPHCHC). The protein is 2-succinyl-5-enolpyruvyl-6-hydroxy-3-cyclohexene-1-carboxylate synthase of Halorubrum lacusprofundi (strain ATCC 49239 / DSM 5036 / JCM 8891 / ACAM 34).